We begin with the raw amino-acid sequence, 349 residues long: MTKLRKIIHIDMDYFFAQVEEKANPSLKDKPFAVGGTNPKRGVISTCNYIAREYGVRSAMPTAIAMQKCPNLILLNTDFAKYKAASAVIRDIFYSFTDKVEPLSLDEAYLDVTDVKEYKNSATLIAQAIKQEIFNKTGLTGSAGVAPNKLLAKIASDINKPNGLYVITPEQVDSFVKDLPVKKLFGVGKVSQEKLKTMNVETCLDLQQLSLATLLDKFGKFGNNLYSYARGIDNREVNPVRIRKSVSVENTYLEDLKTLNACLEKLPSLYDKLTSRMTEEHYKSIVGIVVKFTDTKFNKTSLTRVAKTLDKEAIKSLIIELYQKQNHPIRLIGIGVKLGEVEDRQMKLF.

A UmuC domain is found at isoleucine 7–glycine 188. 2 residues coordinate Mg(2+): aspartate 11 and aspartate 106. Glutamate 107 is a catalytic residue.

It belongs to the DNA polymerase type-Y family. In terms of assembly, monomer. It depends on Mg(2+) as a cofactor.

It localises to the cytoplasm. It carries out the reaction DNA(n) + a 2'-deoxyribonucleoside 5'-triphosphate = DNA(n+1) + diphosphate. Its function is as follows. Poorly processive, error-prone DNA polymerase involved in untargeted mutagenesis. Copies undamaged DNA at stalled replication forks, which arise in vivo from mismatched or misaligned primer ends. These misaligned primers can be extended by PolIV. Exhibits no 3'-5' exonuclease (proofreading) activity. May be involved in translesional synthesis, in conjunction with the beta clamp from PolIII. The sequence is that of DNA polymerase IV from Francisella tularensis subsp. novicida (strain U112).